The following is a 581-amino-acid chain: Guanine nucleotide-binding protein-like 3 homolog (581 aa).

The segment covering 1–49 (MALKRLKTKKSKRLTGRLKHKIEKKVRDHNKKERRAAKKNPKKGSKKQK) has biased composition (basic residues). The interval 1–50 (MALKRLKTKKSKRLTGRLKHKIEKKVRDHNKKERRAAKKNPKKGSKKQKL) is disordered. Residues 64–108 (LKEVEEAKQRQEAERLARREAFKAEREQNKFKTLESMVEDADMRS) are a coiled coil. Ser99 carries the post-translational modification Phosphoserine. Residues 141 to 325 (FKEFRKVIEN…LIDCPGIVFT (185 aa)) enclose the CP-type G domain. Residues 189 to 192 (NKAD), 274 to 281 (GIPNVGKS), and 318 to 321 (DCPG) contribute to the GTP site. The span at 500 to 517 (KPAKGRKRKLDEEKEKVD) shows a compositional bias: basic and acidic residues. Residues 500–519 (KPAKGRKRKLDEEKEKVDPS) form a disordered region.

This sequence belongs to the TRAFAC class YlqF/YawG GTPase family.

Its subcellular location is the nucleus. The protein localises to the nucleolus. Functionally, may play a role in regulating cellular proliferation. This Drosophila melanogaster (Fruit fly) protein is Guanine nucleotide-binding protein-like 3 homolog (Ns1).